The sequence spans 850 residues: Vacuolar membrane protease (850 aa).

Topologically, residues M1–T20 are cytoplasmic. Residues C21–V41 traverse the membrane as a helical segment. The Vacuolar portion of the chain corresponds to P42–V282. N-linked (GlcNAc...) asparagine glycans are attached at residues N53, N116, and N119. The Zn(2+) site is built by H175 and D187. E221 serves as the catalytic Proton acceptor. E222 provides a ligand contact to Zn(2+). Residues N283–F303 traverse the membrane as a helical segment. Topologically, residues R304 to L308 are cytoplasmic. The chain crosses the membrane as a helical span at residues F309 to I329. The Vacuolar segment spans residues L330–T363. The helical transmembrane segment at P364–V384 threads the bilayer. Topologically, residues N385–Q393 are cytoplasmic. Residues F394 to A414 form a helical membrane-spanning segment. Topologically, residues A415 to R425 are vacuolar. The chain crosses the membrane as a helical span at residues A426–Y446. Over A447–Q529 the chain is Cytoplasmic. The helical transmembrane segment at L530 to A550 threads the bilayer. The Vacuolar segment spans residues S551–F563. The helical transmembrane segment at V564–I584 threads the bilayer. Over H585–H590 the chain is Cytoplasmic. A helical transmembrane segment spans residues I591–P611. Residues F612 to Q850 lie on the Vacuolar side of the membrane. 3 N-linked (GlcNAc...) asparagine glycosylation sites follow: N630, N658, and N702.

It belongs to the peptidase M28 family. The cofactor is Zn(2+).

Its subcellular location is the vacuole membrane. May be involved in vacuolar sorting and osmoregulation. This Ajellomyces capsulatus (strain NAm1 / WU24) (Darling's disease fungus) protein is Vacuolar membrane protease.